Consider the following 297-residue polypeptide: CCAAT/enhancer-binding protein beta (297 aa).

The tract at residues 1–22 (MHRLLAWDAACLPPPPAAFRPM) is required for Lys-134 sumoylation. Arg-3 is modified (asymmetric dimethylarginine; by CARM1). The required for MYC transcriptional repression stretch occupies residues 22 to 105 (MEVANFYYEP…YGAKPSKKPS (84 aa)). Lys-39 is subject to N6-acetyllysine; alternate. The residue at position 39 (Lys-39) is an N6-methylated lysine; alternate. N6-acetyllysine; by KAT2A and KAT2B is present on residues Lys-99 and Lys-102. Lys-103 is subject to N6-acetyllysine; by KAT2A and KAT2B; alternate. Residue Lys-103 forms a Glycyl lysine isopeptide (Lys-Gly) (interchain with G-Cter in SUMO2); alternate linkage. Position 105 is a phosphoserine; by RPS6KA1 and PKC/PRKCA (Ser-105). Residue Lys-134 forms a Glycyl lysine isopeptide (Lys-Gly) (interchain with G-Cter in SUMO2); alternate linkage. Lys-134 is covalently cross-linked (Glycyl lysine isopeptide (Lys-Gly) (interchain with G-Cter in SUMO); alternate). Residue Lys-145 forms a Glycyl lysine isopeptide (Lys-Gly) (interchain with G-Cter in SUMO2) linkage. The tract at residues 172–201 (SGSSGSLSTSSSSSPPGTPSPADAKAAPAA) is disordered. Thr-180 is subject to Phosphothreonine; by GSK3-beta. 2 O-linked (GlcNAc) serine glycosylation sites follow: Ser-181 and Ser-182. Position 185 is a phosphoserine; by GSK3-beta (Ser-185). Position 189 is a phosphothreonine; by RPS6KA1, CDK2 and MAPK (Thr-189). Residues Lys-212 and Lys-214 each participate in a glycyl lysine isopeptide (Lys-Gly) (interchain with G-Cter in SUMO2) cross-link. Residues 223–286 (SDEYKMRRER…STLRNLFKQL (64 aa)) form the bZIP domain. A basic motif region spans residues 227 to 247 (KMRRERNNIAVRKSRDKAKMR). Ser-240 bears the Phosphoserine; by PKC/PRKCA mark. A leucine-zipper region spans residues 249 to 256 (LETQHKVL). Phosphoserine; by CaMK2 is present on Ser-277. Residue Lys-284 forms a Glycyl lysine isopeptide (Lys-Gly) (interchain with G-Cter in SUMO2) linkage.

It belongs to the bZIP family. C/EBP subfamily. As to quaternary structure, binds DNA as a homodimer and as a heterodimer. Interacts with MYB; within the complex, MYB and CEBPB bind to different promoter regions. Interacts with ATF4. Binds DNA as a heterodimer with ATF4. Can form stable heterodimers with CEBPA, CEBPD, CEBPE and CEBPG. Interacts with SIX1. Isoform 2 and isoform 3 also form heterodimers. Interacts with TRIM28 and PTGES2. Interacts with PRDM16. Interacts with CCDC85B. Forms a complex with THOC5. Interacts with ZNF638; this interaction increases transcriptional activation. Interacts with CIDEA and CIDEC; these interactions increase transcriptional activation of a subset of CEBPB downstream target genes. Interacts with DDIT3/CHOP. Interacts with EP300; recruits EP300 to chromatin. Interacts with RORA; the interaction disrupts interaction with EP300. Interacts (not methylated) with MED23, MED26, SMARCA2, SMARCB1 and SMARCC1. Interacts with KAT2A and KAT2B. Interacts with ATF5; EP300 is required for ATF5 and CEBPB interaction and DNA binding. Interacts with NFE2L1; the heterodimer represses expression of DSPP during odontoblast differentiation. Post-translationally, phosphorylated at Thr-189 by MAPK and CDK2, serves to prime phosphorylation at Thr-180 and Ser-185 by GSK3B and acquire DNA-binding as well as transactivation activities, required to induce adipogenesis. MAPK and CDK2 act sequentially to maintain Thr-189 in the primed phosphorylated state during mitotical cloning expansion and thereby progression of terminal differentiation. Phosphorylation at Ser-105 enhances transactivation activity. Phosphorylation at Ser-277 in response to calcium increases transactivation activity. Phosphorylated at Thr-189 by RPS6KA1. In terms of processing, methylated. Methylation at Arg-3 by CARM1 and at Lys-39 by EHMT2 inhibit transactivation activity. Methylation is probably inhibited by phosphorylation at Thr-189. Sumoylated by polymeric chains of SUMO2 or SUMO3. Sumoylation at Lys-134 is required for inhibition of T-cells proliferation. In adipocytes, sumoylation at Lys-134 by PIAS1 leads to ubiquitination and subsequent proteasomal degradation. Desumoylated by SENP2, which abolishes ubiquitination and stabilizes protein levels. Post-translationally, ubiquitinated, leading to proteasomal degradation. In terms of processing, O-glycosylated, glycosylation at Ser-181 and Ser-182 prevents phosphorylation on Thr-189, Ser-185 and Thr-180 and DNA binding activity which delays the adipocyte differentiation program. Acetylated. Acetylation at Lys-39 is an important and dynamic regulatory event that contributes to its ability to transactivate target genes, including those associated with adipogenesis and adipocyte function. Deacetylation by HDAC1 represses its transactivation activity. Acetylated by KAT2A and KAT2B within a cluster of lysine residues between amino acids 99-103, this acetylation is strongly induced by glucocorticoid treatment and enhances transactivation activity. Liver and lung.

Its subcellular location is the nucleus. The protein resides in the cytoplasm. Important transcription factor regulating the expression of genes involved in immune and inflammatory responses. Also plays a significant role in adipogenesis, as well as in the gluconeogenic pathway, liver regeneration, and hematopoiesis. The consensus recognition site is 5'-T[TG]NNGNAA[TG]-3'. Its functional capacity is governed by protein interactions and post-translational protein modifications. During early embryogenesis, plays essential and redundant roles with CEBPA. Has a promitotic effect on many cell types such as hepatocytes and adipocytes but has an antiproliferative effect on T-cells by repressing MYC expression, facilitating differentiation along the T-helper 2 lineage. Binds to regulatory regions of several acute-phase and cytokines genes and plays a role in the regulation of acute-phase reaction and inflammation. Also plays a role in intracellular bacteria killing. During adipogenesis, is rapidly expressed and, after activation by phosphorylation, induces CEBPA and PPARG, which turn on the series of adipocyte genes that give rise to the adipocyte phenotype. The delayed transactivation of the CEBPA and PPARG genes by CEBPB appears necessary to allow mitotic clonal expansion and thereby progression of terminal differentiation. Essential for female reproduction because of a critical role in ovarian follicle development. Restricts osteoclastogenesis: together with NFE2L1; represses expression of DSPP during odontoblast differentiation. Functionally, essential for gene expression induction in activated macrophages. Plays a major role in immune responses such as CD4(+) T-cell response, granuloma formation and endotoxin shock. Not essential for intracellular bacteria killing. In terms of biological role, acts as a dominant negative through heterodimerization with isoform 2. Promotes osteoblast differentiation and osteoclastogenesis. This chain is CCAAT/enhancer-binding protein beta, found in Rattus norvegicus (Rat).